Reading from the N-terminus, the 1194-residue chain is F-box only protein 38 (1194 aa).

The region spanning 30-75 (MNQLSHEVLCHIFRYLPLQDIMCMECLSRKLKEAVTLYLRVVRVVD) is the F-box domain. The segment at 59-119 (KLKEAVTLYL…LHPRYLERRR (61 aa)) is interaction with KLF7. 3 short sequence motifs (nuclear export signal) span residues 194 to 201 (LHLVGVNV), 307 to 316 (LEVDLGYLII), and 451 to 460 (LLPSLEFISL). Disordered stretches follow at residues 487–529 (ALVS…FRPD), 577–776 (EEQA…DAES), 793–879 (RTGR…RARS), and 896–915 (KPCHAMKRKRTADKSTSTSD). Residues 493-510 (NSNNDNDNNAPNNNANLH) show a composition bias toward low complexity. Thr-592 is subject to Phosphothreonine. Ser-599, Ser-601, and Ser-607 each carry phosphoserine. Positions 599–609 (SESDDEEDSLE) are enriched in acidic residues. Composition is skewed to basic and acidic residues over residues 622–631 (RYSEREEKTG) and 683–701 (IKADMKAARDVSEKKKSKD). Residues 705 to 728 (SCSSSSSSTAASTAGNASSPSTAS) are compositionally biased toward low complexity. 2 positions are modified to phosphoserine: Ser-742 and Ser-746. Acidic residues predominate over residues 764–774 (EDSEAMEEGDA). Over residues 793–804 (RTGRCSDEERPS) the composition is skewed to basic and acidic residues. The span at 855–867 (SSQPESCDVQSNE) shows a compositional bias: polar residues. Residues 896–906 (KPCHAMKRKRT) are compositionally biased toward basic residues. The short motif at 902–905 (KRKR) is the Nuclear localization signal element.

Part of the SCF (SKP1-CUL1-F-box) E3 ubiquitin-protein ligase complex SCF(FBXO38) composed of CUL1, SKP1, RBX1 and FBXO38. Interacts with KLF7. Interacts with PDCD1/PD-1. As to expression, expressed at high levels in embryo (developing brain, spinal cord, branchial arms and limbs). Widely expressed at low levels in adult tissues, with highest expression in testis. Expressed in postmeiotic spermatids.

It is found in the cytoplasm. It localises to the cytosol. The protein resides in the nucleus. It functions in the pathway protein modification; protein ubiquitination. Functionally, substrate recognition component of a SCF (SKP1-CUL1-F-box protein) E3 ubiquitin-protein ligase complex which mediates the ubiquitination and subsequent proteasomal degradation of PDCD1/PD-1, thereby regulating T-cells-mediated immunity. Required for anti-tumor activity of T-cells by promoting the degradation of PDCD1/PD-1; the PDCD1-mediated inhibitory pathway being exploited by tumors to attenuate anti-tumor immunity and facilitate tumor survival. May indirectly stimulate the activity of transcription factor KLF7, a regulator of neuronal differentiation, without promoting KLF7 ubiquitination. This is F-box only protein 38 from Mus musculus (Mouse).